A 1438-amino-acid chain; its full sequence is DNA polymerase III PolC-type (1438 aa).

Residues 422 to 578 (YVVFDVETTG…YDTEATAYIF (157 aa)) form the Exonuclease domain.

The protein belongs to the DNA polymerase type-C family. PolC subfamily.

Its subcellular location is the cytoplasm. It catalyses the reaction DNA(n) + a 2'-deoxyribonucleoside 5'-triphosphate = DNA(n+1) + diphosphate. In terms of biological role, required for replicative DNA synthesis. This DNA polymerase also exhibits 3' to 5' exonuclease activity. This chain is DNA polymerase III PolC-type, found in Staphylococcus aureus (strain MSSA476).